We begin with the raw amino-acid sequence, 159 residues long: Small ribosomal subunit protein uS17 (159 aa).

Belongs to the universal ribosomal protein uS17 family.

The protein localises to the cytoplasm. This Zea mays (Maize) protein is Small ribosomal subunit protein uS17 (RPS11).